We begin with the raw amino-acid sequence, 607 residues long: Large ribosomal subunit assembly factor BipA (607 aa).

The tr-type G domain maps to 3-198 (ENLRNIAIIA…AIVDHVPAPD (196 aa)). GTP contacts are provided by residues 15-20 (DHGKTT) and 128-131 (NKVD). Residues 481 to 607 (GQRQNGVLIS…RRANRGQKEE (127 aa)) form a C-terminal domain (CTD), required but not sufficient to bind 70S or 30S ribosomes region.

This sequence belongs to the TRAFAC class translation factor GTPase superfamily. Classic translation factor GTPase family. BipA subfamily. As to quaternary structure, monomer.

The protein localises to the cytoplasm. It catalyses the reaction GTP + H2O = GDP + phosphate + H(+). Ribosome-associated GTPase is not affected by low levels of ppGpp, &gt;40 uM ppGpp and &gt;50 uM GDP inhibit GTPase. The C-terminus (residues 387-607 or 481-607) inhibits GTPase activity, in its absence kcat increases, but GTPase is no longer stimulated by 70S ribosome or 30S or 50S subunits. Its function is as follows. A 50S ribosomal subunit assembly protein with GTPase activity, required for 50S subunit assembly at low temperatures, may also play a role in translation. Binds GTP and analogs. Binds the 70S ribosome between the 30S and 50S subunits, in a similar position as ribosome-bound EF-G; it contacts a number of ribosomal proteins, both rRNAs and the A-site tRNA. A ribosome-stimulated GTPase, GTPase activity increases 4 fold in the presence of 70S ribosomes. Binds 70S ribosomes in the presence of GTP or its non-hydrolyzable analog GMPPNP; in the presence of ppGpp or under stress conditions it binds to 30S ribosomal subunits. The sequence is that of Large ribosomal subunit assembly factor BipA from Salmonella typhimurium (strain LT2 / SGSC1412 / ATCC 700720).